The following is a 521-amino-acid chain: Acetylcholine receptor subunit beta-like 1 (521 aa).

The N-terminal stretch at 1–24 (MESSCKSWLLCSILVLVAFSLVSA) is a signal peptide. At 25–235 (SEDEERLVRD…ITFYIIIRRK (211 aa)) the chain is on the extracellular side. The N-linked (GlcNAc...) asparagine glycan is linked to Asn48. A disulfide bridge links Cys152 with Cys166. 3 helical membrane-spanning segments follow: residues 236-260 (TLFY…VFYL), 268-286 (VTLG…LLVS), and 302-323 (YLLF…IINW). The Cytoplasmic segment spans residues 324 to 481 (NFRGPRTHRM…WKYVAMVIDR (158 aa)). Residues 482-500 (LQLYIFFIVTTAGTVGILM) form a helical membrane-spanning segment.

The protein belongs to the ligand-gated ion channel (TC 1.A.9) family. Acetylcholine receptor (TC 1.A.9.1) subfamily. In terms of tissue distribution, CNS in embryos.

The protein localises to the postsynaptic cell membrane. It is found in the cell membrane. Its function is as follows. After binding acetylcholine, the AChR responds by an extensive change in conformation that affects all subunits and leads to opening of an ion-conducting channel across the plasma membrane. This Drosophila melanogaster (Fruit fly) protein is Acetylcholine receptor subunit beta-like 1 (nAChRbeta1).